A 362-amino-acid polypeptide reads, in one-letter code: Phosphoserine aminotransferase (362 aa).

L-glutamate contacts are provided by S9 and R42. Pyridoxal 5'-phosphate is bound by residues 76 to 77 (GR), W102, T153, D174, and Q197. An N6-(pyridoxal phosphate)lysine modification is found at K198. 239–240 (NT) is a binding site for pyridoxal 5'-phosphate.

This sequence belongs to the class-V pyridoxal-phosphate-dependent aminotransferase family. SerC subfamily. In terms of assembly, homodimer. Requires pyridoxal 5'-phosphate as cofactor.

The protein localises to the cytoplasm. It carries out the reaction O-phospho-L-serine + 2-oxoglutarate = 3-phosphooxypyruvate + L-glutamate. The catalysed reaction is 4-(phosphooxy)-L-threonine + 2-oxoglutarate = (R)-3-hydroxy-2-oxo-4-phosphooxybutanoate + L-glutamate. It functions in the pathway amino-acid biosynthesis; L-serine biosynthesis; L-serine from 3-phospho-D-glycerate: step 2/3. Its pathway is cofactor biosynthesis; pyridoxine 5'-phosphate biosynthesis; pyridoxine 5'-phosphate from D-erythrose 4-phosphate: step 3/5. Catalyzes the reversible conversion of 3-phosphohydroxypyruvate to phosphoserine and of 3-hydroxy-2-oxo-4-phosphonooxybutanoate to phosphohydroxythreonine. This is Phosphoserine aminotransferase from Salmonella agona (strain SL483).